A 418-amino-acid chain; its full sequence is Histidine--tRNA ligase (418 aa).

The protein belongs to the class-II aminoacyl-tRNA synthetase family. Homodimer.

The protein resides in the cytoplasm. The enzyme catalyses tRNA(His) + L-histidine + ATP = L-histidyl-tRNA(His) + AMP + diphosphate + H(+). This Thermoanaerobacter pseudethanolicus (strain ATCC 33223 / 39E) (Clostridium thermohydrosulfuricum) protein is Histidine--tRNA ligase.